Here is a 618-residue protein sequence, read N- to C-terminus: 1-deoxy-D-xylulose-5-phosphate synthase (618 aa).

Residues His76 and Gly117–Ser119 contribute to the thiamine diphosphate site. Position 148 (Asp148) interacts with Mg(2+). Thiamine diphosphate is bound by residues Gly149 to Ala150, Asn177, Tyr284, and Glu364. Residue Asn177 coordinates Mg(2+).

This sequence belongs to the transketolase family. DXPS subfamily. As to quaternary structure, homodimer. Mg(2+) serves as cofactor. The cofactor is thiamine diphosphate.

It catalyses the reaction D-glyceraldehyde 3-phosphate + pyruvate + H(+) = 1-deoxy-D-xylulose 5-phosphate + CO2. It functions in the pathway metabolic intermediate biosynthesis; 1-deoxy-D-xylulose 5-phosphate biosynthesis; 1-deoxy-D-xylulose 5-phosphate from D-glyceraldehyde 3-phosphate and pyruvate: step 1/1. In terms of biological role, catalyzes the acyloin condensation reaction between C atoms 2 and 3 of pyruvate and glyceraldehyde 3-phosphate to yield 1-deoxy-D-xylulose-5-phosphate (DXP). The sequence is that of 1-deoxy-D-xylulose-5-phosphate synthase from Francisella philomiragia subsp. philomiragia (strain ATCC 25017 / CCUG 19701 / FSC 153 / O#319-036).